A 581-amino-acid chain; its full sequence is MEPHGETDLVSFAFSSPTPFDPTRPIYLDAQNPSRAFNARQFRLLVRSLIAGLRALGLKPGHCVLVQLENTVIHSALFFAIVGAGGVYMGCDVGSPAHELTHLLRLAEPQLVITAPGALSTLEVCSTQGESFSGQVLLVDELSIDNIVQFAHRAAAAGAEAQTEGLVDQTAGPCIRLESLLQHGESDWLRFEDREQSKRTPAAMFLTSGTSGLPKAAISTHHTIISHHLSVHYRVPYPVVRLMALPMYHSFGDFWTNIFPIRYGEPLYVLPRFDISTFLDAVRQHHISETYMVPAMVQILSQSSLPVAESLASLRYVGISGAPIDGFSIQRFQRLLSPDAVAGNLWGMTEVGVVFQNRYRVPLQFGSVGTLLHGYELRFVDPATGEDVAGTPDSPGELYVRGPGLLLGYKWRTDDKDEQGWFRTGDMVYARDGNYYIIGRTKDLIKVRGQVPDSLNSWTSHSTNRLCDSRYSVAPAEIEGILLKDPGVKDAAVIGVMLPDGSSEVPRAYVVRAGISPESTADQLTDLVQTQLASYKALDGGVVFVDEIPRTGIGKPHRARLSQLDREREKLASILGVSVPA.

204–215 (MFLTSGTSGLPK) contacts AMP. Positions 477 to 555 (EIEGILLKDP…DEIPRTGIGK (79 aa)) are AMP-binding.

It belongs to the ATP-dependent AMP-binding enzyme family.

The catalysed reaction is nicotinate + ATP + CoA = nicotinyl-CoA + AMP + diphosphate. It participates in secondary metabolite biosynthesis; terpenoid biosynthesis. In terms of biological role, nicotinic acid-CoA ligase; part of the gene cluster that mediates the biosynthesis of pyripyropene A, a specific human acyl-coenzyme A:cholesterol acyltransferase 2 inhibitor. The first step of the pathway is the synthesis of nicotinyl-CoA from nicotinic acid by the nicotinic acid-CoA ligase pyr1. Nicotinyl-CoA is then a substrate of polyketide synthase pyr2 to produce 4-hydroxy-6-(3-pyridinyl)-2H-pyran-2-one (HPPO) which is further prenylated by the polyprenyl transferase pyr6 to yield farnesyl-HPPO. The next steps consist of an epoxidation of farnesyl-HPPO to epoxyfarnesyl-HPPO by FAD-dependent monooxygenase pyr5 and a cyclization of the terpenoid portion by the terpene cyclase pyr4 to yield deacetyl-pyripyropene E. The 2 cytochrome P450 monooxygenases pyr3 and pyr9, and the 2 acetyltransferases pyr7 and pyr8 are involved in the conversion of deacetyl-pyripyropene E into pyripyropene A through several cycles of oxidation and acetylation steps. Pyr7 acetylates deacetyl-pyripyropene E to pyripyropene E which is oxidized to 11-deacetyl-pyripyropene O by pyr3, which is in turn acetylated into pyripyropene O by pyr8. Pyripyropene O is then oxidized to deacetyl-pyripyropene A by pyr9. Deacetyl-pyripyropene A is finally acetylated to pyripyropene A by pyr8. This Aspergillus fumigatus (strain ATCC MYA-4609 / CBS 101355 / FGSC A1100 / Af293) (Neosartorya fumigata) protein is Nicotinic acid-CoA ligase pyr1.